A 293-amino-acid polypeptide reads, in one-letter code: Nucleotide-binding protein Bcer98_3698 (293 aa).

Position 14-21 (Gly14–Thr21) interacts with ATP. Asp65–Gly68 is a binding site for GTP.

It belongs to the RapZ-like family.

In terms of biological role, displays ATPase and GTPase activities. The polypeptide is Nucleotide-binding protein Bcer98_3698 (Bacillus cytotoxicus (strain DSM 22905 / CIP 110041 / 391-98 / NVH 391-98)).